Consider the following 422-residue polypeptide: MRSVLSLALLAANVVTAAVVSPFDYSGYKVIRVPTQKDNVKEVQRIITDLNLDTWKYPKSEGQNADIVVPPSQITSFMERISGMSMEMMHEDLGMSISNETSFEAYSAGYAPDINWFKSYHSYQDHISYLQDLQGLFRTRSEYVDAGKSHEGRTIPALHIWGSGGKNSKPAIIFHGTIHAREWITTMVTEYLAWSLLSQYNKNADITSIVDNFDIWVFPIVNPDGFAFTQTSNRLWRKNRQPNPNARCPGRDLNRNYPYQWVGPGSSSNPCSDTYRGAQPGDGTEIKVHIANMKRIASYHGIAMFVDWHSYGQLFMSPYGYSCTARPPTDARHQELSRIFAQALRAVHGTPYRTGPICNTIYQVNGDSVDYALEVLKVKLSLTAELRDTGARGFVLPADQIVPSGEETLAGTVAMLKAVIRG.

A signal peptide spans 1–17 (MRSVLSLALLAANVVTA). Positions 18 to 112 (AVVSPFDYSG…FEAYSAGYAP (95 aa)) are cleaved as a propeptide — activation peptide. The Peptidase M14 domain maps to 119–419 (SYHSYQDHIS…AGTVAMLKAV (301 aa)). Zn(2+) is bound by residues H179 and E182. Substrate contacts are provided by residues 179–182 (HARE), R237, and 254–255 (NR). C248 and C271 are joined by a disulfide. Zn(2+) is bound at residue H309. 310 to 311 (SY) is a substrate binding site. Residue E385 is the Proton donor/acceptor of the active site.

It belongs to the peptidase M14 family. The cofactor is Zn(2+).

Its subcellular location is the secreted. Functionally, extracellular metalloprotease that contributes to pathogenicity. The protein is Metallocarboxypeptidase A (MCPA) of Trichophyton tonsurans (Scalp ringworm fungus).